A 384-amino-acid chain; its full sequence is Transcription factor 7 (384 aa).

Residues 1-16 (MPQLDSGGGGAGGGDD) show a composition bias toward gly residues. The interval 1 to 59 (MPQLDSGGGGAGGGDDLGAPDELLAFQDEGEEQDDKSRDSAAGPERDLAELKSSLVNES) is CTNNB1-binding. Disordered regions lie at residues 1 to 88 (MPQL…LGRE), 133 to 183 (PPSG…QKQV), and 337 to 384 (SARD…MTVL). Residues 35–50 (DKSRDSAAGPERDLAE) are compositionally biased toward basic and acidic residues. The segment covering 62 to 78 (AAGGAGIPGVPGAGAGA) has biased composition (gly residues). The HMG box DNA-binding region spans 269-337 (IKKPLNAFML…LHMQLYPGWS (69 aa)). Residues 344 to 348 (KKKRR) carry the Nuclear localization signal motif. Residues 352–370 (KHQESTTGGKRNAFGTYPE) show a composition bias toward basic and acidic residues. Residues 374–384 (APAPFLPMTVL) are compositionally biased toward low complexity.

It belongs to the TCF/LEF family. As to quaternary structure, binds the armadillo repeat of CTNNB1 and forms a stable complex. Interacts with TLE5, TLE1, TLE2, TLE3 and TLE4. Interacts with MLLT11. Long isoform interacts (via N-terminus) with SOX13; inhibits WNT-mediated transcriptional activity. Interacts with DAZAP2. Predominantly expressed in T-cells. Also detected in proliferating intestinal epithelial cells and in the basal epithelial cells of mammary gland epithelium.

It is found in the nucleus. In terms of biological role, transcriptional activator involved in T-cell lymphocyte differentiation. Necessary for the survival of CD4(+) CD8(+) immature thymocytes. Isoforms lacking the N-terminal CTNNB1 binding domain cannot fulfill this role. Binds to the T-lymphocyte-specific enhancer element (5'-WWCAAAG-3') found in the promoter of the CD3E gene. Represses expression of the T-cell receptor gamma gene in alpha-beta T-cell lineages. Required for the development of natural killer receptor-positive lymphoid tissue inducer T-cells. TLE1, TLE2, TLE3 and TLE4 repress transactivation mediated by TCF7 and CTNNB1. May also act as feedback transcriptional repressor of CTNNB1 and TCF7L2 target genes. The chain is Transcription factor 7 from Homo sapiens (Human).